We begin with the raw amino-acid sequence, 132 residues long: Subtelomeric hrmA-associated cluster protein AFUB_079000 (132 aa).

Part of the subtelomeric hrmA-associated cluster (HAC) containing genes that alter the hyphal surface (such as reduced total chitin or increased beta-glucan exposure) and perturb inter-hyphal interactions within the developing biofilms, resulting in a loss of vertically aligned polarized growing filaments. Consequently, this hypoxia-typic morphotype (called H-MORPH) with altered biofilm architecture leads to increased hypoxia fitness, increased host inflammation, rapid disease progression, and mortality in a murine model of invasive aspergillosis. The protein is Subtelomeric hrmA-associated cluster protein AFUB_079000 of Aspergillus fumigatus (strain CBS 144.89 / FGSC A1163 / CEA10) (Neosartorya fumigata).